An 87-amino-acid chain; its full sequence is Phytosulfokines 2 (87 aa).

An N-terminal signal peptide occupies residues 1–22; the sequence is MANVSALLTIALLLCSTLMCTA. Residues 23 to 77 constitute a propeptide that is removed on maturation; sequence RPEPAISISITTAADPCNMEKKIEGKLDDMHMVDENCGADDEDCLMRRTLVAHTD. Sulfotyrosine is present on residues Tyr78 and Tyr80. Positions 83–87 are excised as a propeptide; the sequence is KKKHP.

The protein belongs to the phytosulfokine family. In terms of processing, sulfation is important for activity and for the binding to a putative membrane receptor. Post-translationally, PSK-beta is an enzymatic derivative of PSK-alpha. Expressed in stems, roots and leaves.

The protein localises to the secreted. Its function is as follows. Promotes plant cell differentiation, organogenesis and somatic embryogenesis as well as cell proliferation. The protein is Phytosulfokines 2 (PSK2) of Arabidopsis thaliana (Mouse-ear cress).